Reading from the N-terminus, the 86-residue chain is Insulin (86 aa).

3 disulfide bridges follow: Cys7/Cys72, Cys19/Cys85, and Cys71/Cys76. The propeptide at 33 to 63 (EAEDPQVGEVELGGGPGLGGLQPLALAGPQQ) is c peptide.

This sequence belongs to the insulin family. Heterodimer of a B chain and an A chain linked by two disulfide bonds.

It localises to the secreted. Its function is as follows. Insulin decreases blood glucose concentration. It increases cell permeability to monosaccharides, amino acids and fatty acids. It accelerates glycolysis, the pentose phosphate cycle, and glycogen synthesis in liver. This Equus caballus (Horse) protein is Insulin (INS).